Here is a 37-residue protein sequence, read N- to C-terminus: Photosystem I reaction center subunit VIII (37 aa).

The helical transmembrane segment at 9–29 threads the bilayer; that stretch reads SILVTLVGLVFPAFAMASLFL.

It belongs to the PsaI family.

The protein localises to the plastid. It is found in the chloroplast thylakoid membrane. May help in the organization of the PsaL subunit. The protein is Photosystem I reaction center subunit VIII of Pelargonium hortorum (Common geranium).